The sequence spans 621 residues: Lamin-C (621 aa).

The interval 1–47 (MSARRVTLNTRVSRASTSTPVGGASTSSRVGATSPTSPTRTSRQQEK) is disordered. Residues 1–47 (MSARRVTLNTRVSRASTSTPVGGASTSSRVGATSPTSPTRTSRQQEK) form a head region. Positions 7–31 (TLNTRVSRASTSTPVGGASTSSRVG) are enriched in polar residues. Low complexity predominate over residues 33–42 (TSPTSPTRTS). Ser-34 bears the Phosphoserine mark. An IF rod domain is found at 46-402 (EKEELQHLND…KLLCGEERRL (357 aa)). The coil 1A stretch occupies residues 47–85 (KEELQHLNDRLACYIDRMRNLENENSRLTQELNLAQDTV). The interval 86–95 (NRETSNLKAV) is linker 1. The segment at 96 to 233 (YEKELAAARK…QVHTQELTET (138 aa)) is coil 1B. The interval 234-257 (RSRRQIEISEIDGRLSRQYEAKLQ) is linker 2. The segment at 258 to 403 (QSLQELRDQY…LLCGEERRLN (146 aa)) is coil 2. A disordered region spans residues 404-458 (IESPGRPTTDSGISSNGSHLTASASSRSGRVTPSGRRSATPGISGSSAVKRRRTV). The tract at residues 404–621 (IESPGRPTTD…GVRSLFSLLF (218 aa)) is tail. A phosphoserine mark is found at Ser-406 and Ser-441. Positions 409–450 (RPTTDSGISSNGSHLTASASSRSGRVTPSGRRSATPGISGSS) are enriched in polar residues. Thr-443 bears the Phosphothreonine mark. The short motif at 453-458 (KRRRTV) is the Nuclear localization signal element. The 115-residue stretch at 468–582 (SEYSVNAAAK…EDVASYDRVR (115 aa)) folds into the LTD domain. Positions 585–605 (VSSHTSRHRSSGTPSTGFTLG) are disordered.

The protein belongs to the intermediate filament family. In terms of assembly, interacts with MAN1. In terms of tissue distribution, first detected from late stage 12 in the oenocytes, abdominal segments, hindgut and posterior spiracles, with expression increasing in stage 13 (at protein level). In stage 14, also becomes detectable in the foregut (at protein level). Stage 15 shows expression in the epidermis, dorsal longitudinal trunk, pharynx, esophagus and proventriculus, with the dorsal pharyngeal musculature showing expression in late stage 15 (at protein level). In stage 16 embryos, also detected in the exit glia with increasing expression in the somatic musculature (at protein level). Also detected in the visceral mesoderm but not in the midgut or central nervous system until the end of embryogenesis (at protein level). In third instar larvae, detectable at varying levels in all cell types (at protein level). Expressed in spermatocytes (at protein level).

Its subcellular location is the nucleus. The protein resides in the nucleus lamina. Its function is as follows. Lamins are components of the nuclear lamina, a fibrous layer on the nucleoplasmic side of the inner nuclear membrane, which is thought to provide a framework for the nuclear envelope and may also interact with chromatin. In spermatocytes, regulates cytokinesis during meiosis. This chain is Lamin-C (LamC), found in Drosophila melanogaster (Fruit fly).